Consider the following 246-residue polypeptide: 3-deoxy-manno-octulosonate cytidylyltransferase (246 aa).

This sequence belongs to the KdsB family.

The protein localises to the cytoplasm. The enzyme catalyses 3-deoxy-alpha-D-manno-oct-2-ulosonate + CTP = CMP-3-deoxy-beta-D-manno-octulosonate + diphosphate. Its pathway is nucleotide-sugar biosynthesis; CMP-3-deoxy-D-manno-octulosonate biosynthesis; CMP-3-deoxy-D-manno-octulosonate from 3-deoxy-D-manno-octulosonate and CTP: step 1/1. It functions in the pathway bacterial outer membrane biogenesis; lipopolysaccharide biosynthesis. Activates KDO (a required 8-carbon sugar) for incorporation into bacterial lipopolysaccharide in Gram-negative bacteria. This is 3-deoxy-manno-octulosonate cytidylyltransferase from Rickettsia peacockii (strain Rustic).